The following is a 363-amino-acid chain: tRNA N6-adenosine threonylcarbamoyltransferase (363 aa).

Positions 138, 142, and 159 each coordinate Fe cation. Residues 159 to 163 (YVSGG), Asp-191, Asp-212, and Ser-295 each bind substrate. A Fe cation-binding site is contributed by Asp-323.

This sequence belongs to the KAE1 / TsaD family. Fe(2+) serves as cofactor.

Its subcellular location is the cytoplasm. The enzyme catalyses L-threonylcarbamoyladenylate + adenosine(37) in tRNA = N(6)-L-threonylcarbamoyladenosine(37) in tRNA + AMP + H(+). Required for the formation of a threonylcarbamoyl group on adenosine at position 37 (t(6)A37) in tRNAs that read codons beginning with adenine. Is probably involved in the transfer of the threonylcarbamoyl moiety of threonylcarbamoyl-AMP (TC-AMP) to the N6 group of A37. In Hyperthermus butylicus (strain DSM 5456 / JCM 9403 / PLM1-5), this protein is tRNA N6-adenosine threonylcarbamoyltransferase.